Reading from the N-terminus, the 875-residue chain is Probable serine/threonine-protein kinase samkC (875 aa).

Polar residues predominate over residues 1–12 (METTTITSILDD). Positions 1-47 (METTTITSILDDNNNNNNNNNNNNNNNNNNNNNNNNNNNNNNNNNYN) are disordered. Positions 13–45 (NNNNNNNNNNNNNNNNNNNNNNNNNNNNNNNNN) are enriched in low complexity. Residues 51–116 (WDNEMVCKWL…SEFDDLKNIF (66 aa)) form the SAM domain. A coiled-coil region spans residues 135–162 (DNNNLNNLNNNNNNNNNNNNNNNNNNNN). Positions 136–168 (NNNLNNLNNNNNNNNNNNNNNNNNNNNNNNNNN) are enriched in low complexity. The interval 136–170 (NNNLNNLNNNNNNNNNNNNNNNNNNNNNNNNNNKT) is disordered. Positions 181-452 (YVFIKQMKGS…SKQLLNFSWF (272 aa)) constitute a Protein kinase domain. ATP-binding positions include 187–195 (MKGSVNCSL) and lysine 210. Catalysis depends on aspartate 301, which acts as the Proton acceptor. Disordered stretches follow at residues 331–362 (NNND…NDTN) and 461–718 (SEPQ…NNNN). Positions 474–554 (PQTSQSKPKP…KPKPSSSLSS (81 aa)) are enriched in low complexity. A compositionally biased stretch (pro residues) spans 555–564 (EPPPLEPQPK). 3 stretches are compositionally biased toward low complexity: residues 565–581 (PQTS…LSSS), 589–611 (QPTQ…SQPT), and 617–653 (QPKS…QQQK). Residues 626 to 655 (QSKQQQQQQQQQQQQQQQQQQQQQQQQKSK) adopt a coiled-coil conformation. Positions 654–663 (SKPEQSKSKP) are enriched in basic and acidic residues. Residues 664 to 718 (EQSQSKPQPGQPLQSPSKPQPIPSTTKTTTTTTTTTTPNNNNNNNNNNNNNNNNN) are compositionally biased toward low complexity. Residues 842–862 (TLILYTFYYFLSNTLIYQIIL) form a helical membrane-spanning segment.

It belongs to the protein kinase superfamily. Ser/Thr protein kinase family.

Its subcellular location is the membrane. The catalysed reaction is L-seryl-[protein] + ATP = O-phospho-L-seryl-[protein] + ADP + H(+). It carries out the reaction L-threonyl-[protein] + ATP = O-phospho-L-threonyl-[protein] + ADP + H(+). This is Probable serine/threonine-protein kinase samkC (samkC) from Dictyostelium discoideum (Social amoeba).